The primary structure comprises 232 residues: Large ribosomal subunit protein uL1 (232 aa).

This sequence belongs to the universal ribosomal protein uL1 family. Part of the 50S ribosomal subunit.

Its function is as follows. Binds directly to 23S rRNA. The L1 stalk is quite mobile in the ribosome, and is involved in E site tRNA release. Protein L1 is also a translational repressor protein, it controls the translation of the L11 operon by binding to its mRNA. The protein is Large ribosomal subunit protein uL1 of Coxiella burnetii (strain RSA 331 / Henzerling II).